Here is a 376-residue protein sequence, read N- to C-terminus: UPF0754 membrane protein SSP0953 (376 aa).

2 helical membrane-spanning segments follow: residues Phe4–Ile24 and Phe356–Val376.

The protein belongs to the UPF0754 family.

It is found in the cell membrane. This Staphylococcus saprophyticus subsp. saprophyticus (strain ATCC 15305 / DSM 20229 / NCIMB 8711 / NCTC 7292 / S-41) protein is UPF0754 membrane protein SSP0953.